We begin with the raw amino-acid sequence, 304 residues long: DnaJ homolog subfamily C member 17 (304 aa).

One can recognise a J domain in the interval 11–76 (DLYALLGIEE…AARAAYDKVR (66 aa)). Residues 79 to 106 (KKQAAERTQKLDEKRKKVKLDLEARERQ) show a composition bias toward basic and acidic residues. The disordered stretch occupies residues 79 to 145 (KKQAAERTQK…SRQLEEQQRL (67 aa)). Position 112 is a phosphoserine (Ser112). The span at 118-145 (SRSTRTLEQEIERLREEGSRQLEEQQRL) shows a compositional bias: basic and acidic residues. The RRM domain maps to 178 to 249 (KCKKEDESKG…NPLKISWLEG (72 aa)). Lys264 carries the N6-methyllysine modification.

The protein localises to the cytoplasm. Its subcellular location is the nucleus. In terms of biological role, may negatively affect PAX8-induced thyroglobulin/TG transcription. The protein is DnaJ homolog subfamily C member 17 (DNAJC17) of Homo sapiens (Human).